The following is a 175-amino-acid chain: MGLSLEQKKAMVQEVAAVAKEAHSAVGAEYRGLTAGQMDALRQQARENGVYLRVVKNRLAKRAVEGTEFECMQSELTGPLLLAFSLEDPGAAARVIKAYSKEHEALQTRLVAVGGQVYPASELERLASLPTREEALAMLLATMKAPVQKLATTLNEVPGKLVRTVAAVKDAKQAA.

The protein belongs to the universal ribosomal protein uL10 family. As to quaternary structure, part of the ribosomal stalk of the 50S ribosomal subunit. The N-terminus interacts with L11 and the large rRNA to form the base of the stalk. The C-terminus forms an elongated spine to which L12 dimers bind in a sequential fashion forming a multimeric L10(L12)X complex.

Its function is as follows. Forms part of the ribosomal stalk, playing a central role in the interaction of the ribosome with GTP-bound translation factors. The protein is Large ribosomal subunit protein uL10 of Alkalilimnicola ehrlichii (strain ATCC BAA-1101 / DSM 17681 / MLHE-1).